The chain runs to 334 residues: Holliday junction branch migration complex subunit RuvB (334 aa).

Residues 4-186 (ADRLIAPISN…FGIVQRLEYY (183 aa)) are large ATPase domain (RuvB-L). ATP is bound by residues Ile25, Arg26, Gly67, Lys70, Thr71, Thr72, 133–135 (EDY), Arg176, Tyr186, and Arg223. Residue Thr71 participates in Mg(2+) binding. A small ATPAse domain (RuvB-S) region spans residues 187-257 (KVADLQHIVQ…TADRALNMLD (71 aa)). Residues 260 to 334 (HQGFDYMDRK…RAYLHFGIEK (75 aa)) form a head domain (RuvB-H) region. DNA is bound by residues Arg315 and Arg320.

The protein belongs to the RuvB family. As to quaternary structure, homohexamer. Forms an RuvA(8)-RuvB(12)-Holliday junction (HJ) complex. HJ DNA is sandwiched between 2 RuvA tetramers; dsDNA enters through RuvA and exits via RuvB. An RuvB hexamer assembles on each DNA strand where it exits the tetramer. Each RuvB hexamer is contacted by two RuvA subunits (via domain III) on 2 adjacent RuvB subunits; this complex drives branch migration. In the full resolvosome a probable DNA-RuvA(4)-RuvB(12)-RuvC(2) complex forms which resolves the HJ.

Its subcellular location is the cytoplasm. The catalysed reaction is ATP + H2O = ADP + phosphate + H(+). Its function is as follows. The RuvA-RuvB-RuvC complex processes Holliday junction (HJ) DNA during genetic recombination and DNA repair, while the RuvA-RuvB complex plays an important role in the rescue of blocked DNA replication forks via replication fork reversal (RFR). RuvA specifically binds to HJ cruciform DNA, conferring on it an open structure. The RuvB hexamer acts as an ATP-dependent pump, pulling dsDNA into and through the RuvAB complex. RuvB forms 2 homohexamers on either side of HJ DNA bound by 1 or 2 RuvA tetramers; 4 subunits per hexamer contact DNA at a time. Coordinated motions by a converter formed by DNA-disengaged RuvB subunits stimulates ATP hydrolysis and nucleotide exchange. Immobilization of the converter enables RuvB to convert the ATP-contained energy into a lever motion, pulling 2 nucleotides of DNA out of the RuvA tetramer per ATP hydrolyzed, thus driving DNA branch migration. The RuvB motors rotate together with the DNA substrate, which together with the progressing nucleotide cycle form the mechanistic basis for DNA recombination by continuous HJ branch migration. Branch migration allows RuvC to scan DNA until it finds its consensus sequence, where it cleaves and resolves cruciform DNA. This is Holliday junction branch migration complex subunit RuvB from Vibrio cholerae serotype O1 (strain ATCC 39315 / El Tor Inaba N16961).